The sequence spans 547 residues: uncharacterized protein (547 aa).

The span at R38–E50 shows a compositional bias: basic and acidic residues. The interval R38–E89 is disordered. A compositionally biased stretch (low complexity) spans T62–S75. The next 12 membrane-spanning stretches (helical) occupy residues I108 to F128, L148 to S168, L174 to S194, I197 to A217, G233 to G253, W265 to M285, M346 to F366, G377 to I397, L418 to T438, W445 to V465, A478 to A500, and S514 to G534.

It belongs to the major facilitator superfamily. CAR1 family.

Its subcellular location is the membrane. This is an uncharacterized protein from Schizosaccharomyces pombe (strain 972 / ATCC 24843) (Fission yeast).